We begin with the raw amino-acid sequence, 210 residues long: Large ribosomal subunit protein uL4 (210 aa).

Positions 41-51 (ANARQGTQSTK) are enriched in polar residues. Disordered stretches follow at residues 41–60 (ANAR…QGSS) and 67–98 (KGTG…DFSK).

Belongs to the universal ribosomal protein uL4 family. Part of the 50S ribosomal subunit.

In terms of biological role, one of the primary rRNA binding proteins, this protein initially binds near the 5'-end of the 23S rRNA. It is important during the early stages of 50S assembly. It makes multiple contacts with different domains of the 23S rRNA in the assembled 50S subunit and ribosome. Forms part of the polypeptide exit tunnel. This Dehalococcoides mccartyi (strain ATCC BAA-2100 / JCM 16839 / KCTC 5957 / BAV1) protein is Large ribosomal subunit protein uL4.